A 127-amino-acid chain; its full sequence is uncharacterized protein (127 aa).

The first 16 residues, 1–16 (MLKKIIFGITISLTTG), serve as a signal peptide directing secretion. Residue Cys-17 is the site of N-palmitoyl cysteine attachment. The S-diacylglycerol cysteine moiety is linked to residue Cys-17. Residues 56 to 101 (EVREEIQKYRVEIVDINKKKRELYNRLSKEAQSFLAEQQKYKQKLS) adopt a coiled-coil conformation. Positions 102 to 127 (IPKLLIENDPKNNTANSKDNNDKDMK) are disordered.

The protein resides in the cell membrane. This is an uncharacterized protein from Rickettsia prowazekii (strain Madrid E).